We begin with the raw amino-acid sequence, 226 residues long: LexA repressor (226 aa).

A DNA-binding region (H-T-H motif) is located at residues 42–62; the sequence is MREIGDAVGLASLSSVTHQLN. Catalysis depends on for autocatalytic cleavage activity residues serine 150 and lysine 187.

The protein belongs to the peptidase S24 family. As to quaternary structure, homodimer.

The enzyme catalyses Hydrolysis of Ala-|-Gly bond in repressor LexA.. In terms of biological role, represses a number of genes involved in the response to DNA damage (SOS response), including recA and lexA. In the presence of single-stranded DNA, RecA interacts with LexA causing an autocatalytic cleavage which disrupts the DNA-binding part of LexA, leading to derepression of the SOS regulon and eventually DNA repair. This chain is LexA repressor, found in Clavibacter sepedonicus (Clavibacter michiganensis subsp. sepedonicus).